The primary structure comprises 254 residues: 5'-nucleotidase SurE (254 aa).

A divalent metal cation contacts are provided by aspartate 8, aspartate 9, serine 39, and asparagine 91.

The protein belongs to the SurE nucleotidase family. A divalent metal cation serves as cofactor.

It is found in the cytoplasm. It carries out the reaction a ribonucleoside 5'-phosphate + H2O = a ribonucleoside + phosphate. Functionally, nucleotidase that shows phosphatase activity on nucleoside 5'-monophosphates. This is 5'-nucleotidase SurE from Methylibium petroleiphilum (strain ATCC BAA-1232 / LMG 22953 / PM1).